A 289-amino-acid chain; its full sequence is Shikimate dehydrogenase (NADP(+)) (289 aa).

Shikimate contacts are provided by residues 20-22 (SIS) and serine 67. Lysine 71 serves as the catalytic Proton acceptor. Aspartate 83 serves as a coordination point for NADP(+). The shikimate site is built by asparagine 92 and aspartate 107. NADP(+) is bound by residues 132–136 (GGGGA) and valine 230. A shikimate-binding site is contributed by tyrosine 232. Glycine 253 provides a ligand contact to NADP(+).

It belongs to the shikimate dehydrogenase family. As to quaternary structure, homodimer.

It catalyses the reaction shikimate + NADP(+) = 3-dehydroshikimate + NADPH + H(+). The protein operates within metabolic intermediate biosynthesis; chorismate biosynthesis; chorismate from D-erythrose 4-phosphate and phosphoenolpyruvate: step 4/7. In terms of biological role, involved in the biosynthesis of the chorismate, which leads to the biosynthesis of aromatic amino acids. Catalyzes the reversible NADPH linked reduction of 3-dehydroshikimate (DHSA) to yield shikimate (SA). The sequence is that of Shikimate dehydrogenase (NADP(+)) from Streptococcus suis (strain 98HAH33).